A 436-amino-acid polypeptide reads, in one-letter code: GTPase Der (436 aa).

2 consecutive EngA-type G domains span residues 4-167 and 175-351; these read PTIA…PNEE and IKFS…QSQN. Residues 10–17, 57–61, 119–122, 181–188, 229–233, and 294–297 each bind GTP; these read GRPNVGKS, DTGGI, NKVD, DTAGM, and NKWD. Residues 352–436 enclose the KH-like domain; it reads TRIPSAVLND…PIHLIARKRK (85 aa).

This sequence belongs to the TRAFAC class TrmE-Era-EngA-EngB-Septin-like GTPase superfamily. EngA (Der) GTPase family. In terms of assembly, associates with the 50S ribosomal subunit.

Its function is as follows. GTPase that plays an essential role in the late steps of ribosome biogenesis. The chain is GTPase Der from Streptococcus sanguinis (strain SK36).